We begin with the raw amino-acid sequence, 285 residues long: Bifunctional protein FolD (285 aa).

NADP(+) contacts are provided by residues 166–168 (GAS) and Ile-232.

It belongs to the tetrahydrofolate dehydrogenase/cyclohydrolase family. As to quaternary structure, homodimer.

The enzyme catalyses (6R)-5,10-methylene-5,6,7,8-tetrahydrofolate + NADP(+) = (6R)-5,10-methenyltetrahydrofolate + NADPH. It carries out the reaction (6R)-5,10-methenyltetrahydrofolate + H2O = (6R)-10-formyltetrahydrofolate + H(+). The protein operates within one-carbon metabolism; tetrahydrofolate interconversion. Functionally, catalyzes the oxidation of 5,10-methylenetetrahydrofolate to 5,10-methenyltetrahydrofolate and then the hydrolysis of 5,10-methenyltetrahydrofolate to 10-formyltetrahydrofolate. The chain is Bifunctional protein FolD from Pseudoalteromonas atlantica (strain T6c / ATCC BAA-1087).